The following is a 345-amino-acid chain: 3-dehydroquinate synthase (345 aa).

Residues 86 to 90 (GALLD), 110 to 111 (TT), lysine 123, and lysine 132 contribute to the NAD(+) site. Positions 165, 229, and 243 each coordinate Zn(2+).

It belongs to the sugar phosphate cyclases superfamily. Dehydroquinate synthase family. NAD(+) is required as a cofactor. It depends on Co(2+) as a cofactor. Zn(2+) serves as cofactor.

The protein resides in the cytoplasm. The enzyme catalyses 7-phospho-2-dehydro-3-deoxy-D-arabino-heptonate = 3-dehydroquinate + phosphate. Its pathway is metabolic intermediate biosynthesis; chorismate biosynthesis; chorismate from D-erythrose 4-phosphate and phosphoenolpyruvate: step 2/7. In terms of biological role, catalyzes the conversion of 3-deoxy-D-arabino-heptulosonate 7-phosphate (DAHP) to dehydroquinate (DHQ). In Pyrobaculum aerophilum (strain ATCC 51768 / DSM 7523 / JCM 9630 / CIP 104966 / NBRC 100827 / IM2), this protein is 3-dehydroquinate synthase.